The chain runs to 294 residues: Golgi phosphoprotein 3 homolog sauron (294 aa).

Positions 1–52 (MNRSDGLVRRSVKPRENGGAEGGLNANTPDDNQDALDNLKDQEDNIDDGDSK) are disordered. Over residues 37-52 (DNLKDQEDNIDDGDSK) the composition is skewed to basic and acidic residues. Tryptophan 77, arginine 86, lysine 167, and arginine 170 together coordinate a 1,2-diacyl-sn-glycero-3-phospho-(1D-myo-inositol 4-phosphate). Residues 186-197 (EKQNFLLFDMTT) form a beta-hairpin required for oligomerization region.

The protein belongs to the GOLPH3/VPS74 family. As to quaternary structure, homooligomer. Interacts with botv, Ext2 and ttv. Interacts with Vti1. Interacts with Vps35, Rab5, Chc, Rab11, zip, Pav and Septin1.

It is found in the golgi apparatus membrane. The protein resides in the cytoplasmic vesicle. It localises to the cleavage furrow. In terms of biological role, phosphatidylinositol-4-phosphate-binding protein that links Golgi membranes to the cytoskeleton and may participate in the tensile force required for vesicle budding from the Golgi. Thereby, may play a role in Golgi membrane trafficking and could indirectly give its flattened shape to the Golgi apparatus. May also bind to the coatomer to regulate Golgi membrane trafficking. May play a role in anterograde transport from the Golgi to the plasma membrane and regulate secretion. Also involved in the control of the localization of Golgi enzymes through interaction with their cytoplasmic part. Functions in cytokinesis by regulating contractile ring formation and vesicle trafficking during cleavage furrow ingression. May also have a role in the intital steps of central spindle formation. Can also bind phosphatidylinositol-3-phosphate and phosphatidylinositol-5-phosphate in vitro. The chain is Golgi phosphoprotein 3 homolog sauron from Drosophila melanogaster (Fruit fly).